A 712-amino-acid chain; its full sequence is Amine oxidase [copper-containing] gamma 1 (712 aa).

The first 24 residues, 1-24 (MAEPSFARLFLLFFSFLLIFATYS), serve as a signal peptide directing secretion. Asn146 and Asn173 each carry an N-linked (GlcNAc...) asparagine glycan. Cysteines 188 and 210 form a disulfide. 352–363 (YMDAGELGLGPT) provides a ligand contact to substrate. The active-site Proton acceptor is the Asp354. Cys373 and Cys399 are joined by a disulfide. 439-444 (VGNYDY) lines the substrate pocket. Tyr442 (schiff-base intermediate with substrate; via topaquinone) is an active-site residue. Tyr442 bears the 2',4',5'-topaquinone mark. Residues His499 and His501 each coordinate Cu cation. Positions 508, 509, and 510 each coordinate Mn(2+). Asn516 and Asn617 each carry an N-linked (GlcNAc...) asparagine glycan. Mn(2+)-binding residues include Asp651 and Ile652. His662 provides a ligand contact to Cu cation.

The protein belongs to the copper/topaquinone oxidase family. As to quaternary structure, homodimer. Cu cation serves as cofactor. Requires Zn(2+) as cofactor. It depends on L-topaquinone as a cofactor. The cofactor is Mn(2+). Post-translationally, topaquinone (TPQ) is generated by copper-dependent autoxidation of a specific tyrosyl residue. In terms of tissue distribution, mostly expressed in roots, stems and flowers, and, at lower levels, in leaves and cotyledons.

Its subcellular location is the secreted. The protein resides in the extracellular space. The protein localises to the apoplast. The catalysed reaction is a primary methyl amine + O2 + H2O = an aldehyde + H2O2 + NH4(+). Its pathway is amine and polyamine degradation; putrescine degradation. Functionally, copper amine oxidase that can use putrescine and spermidine as substrates. Required for abscisic acid- (ABA) and polyamine- (PA) and H(2)O(2)-dependent induced nitric oxide (NO) biosynthesis. Involved in ABA signal transduction and in responses to osmotic stress. The chain is Amine oxidase [copper-containing] gamma 1 from Arabidopsis thaliana (Mouse-ear cress).